Here is a 243-residue protein sequence, read N- to C-terminus: Voltage-gated monoatomic cation channel TMEM109 (243 aa).

Positions 1–33 (MAGAHSTPLWSRHLLKAVLMVLVALFLVHSASA) are cleaved as a signal peptide. Over 34–83 (QSHREFASPGQQKKETSADILTQIGRSLKEMLDTWLGPETMHVISETLLQ) the chain is Lumenal. A helical transmembrane segment spans residues 84-104 (VMWAISSAISVACFALSGIAA). Residues 105–135 (QLLSALGLDGEQLTQGLKLSPSQVQTLLLWG) lie on the Cytoplasmic side of the membrane. A helical transmembrane segment spans residues 136–156 (AAALVIYWLLSLLLGLVLALL). Residues 157–185 (GRILGGLKLVLFVAGFVALVRSVPDPSTR) lie on the Lumenal side of the membrane. Residues 186-205 (ALMLLALLTLFALLSRLTGS) traverse the membrane as a helical segment. Over 206 to 243 (RSSGSHLEAKVRGLERQIEELRGRQRRAAKMPRSMEEE) the chain is Cytoplasmic.

In terms of assembly, homooligomer. Interacts with CRYAB; in the cellular response to DNA damage.

The protein localises to the nucleus outer membrane. Its subcellular location is the endoplasmic reticulum membrane. The protein resides in the sarcoplasmic reticulum membrane. The enzyme catalyses K(+)(in) = K(+)(out). The catalysed reaction is Ca(2+)(in) = Ca(2+)(out). Functionally, functions as a voltage-gated monoatomic cation channel permeable to both potassium and calcium. Plays a role in the cellular response to DNA damage. This is Voltage-gated monoatomic cation channel TMEM109 from Mus musculus (Mouse).